The primary structure comprises 119 residues: Phosphoribosyl-AMP cyclohydrolase (119 aa).

Aspartate 77 serves as a coordination point for Mg(2+). Cysteine 78 provides a ligand contact to Zn(2+). 2 residues coordinate Mg(2+): aspartate 79 and aspartate 81. Zn(2+) contacts are provided by cysteine 94 and cysteine 101.

Belongs to the PRA-CH family. As to quaternary structure, homodimer. The cofactor is Mg(2+). Requires Zn(2+) as cofactor.

Its subcellular location is the cytoplasm. It carries out the reaction 1-(5-phospho-beta-D-ribosyl)-5'-AMP + H2O = 1-(5-phospho-beta-D-ribosyl)-5-[(5-phospho-beta-D-ribosylamino)methylideneamino]imidazole-4-carboxamide. It participates in amino-acid biosynthesis; L-histidine biosynthesis; L-histidine from 5-phospho-alpha-D-ribose 1-diphosphate: step 3/9. Its function is as follows. Catalyzes the hydrolysis of the adenine ring of phosphoribosyl-AMP. This chain is Phosphoribosyl-AMP cyclohydrolase, found in Dinoroseobacter shibae (strain DSM 16493 / NCIMB 14021 / DFL 12).